The chain runs to 97 residues: Putative septation protein SpoVG (97 aa).

Belongs to the SpoVG family.

Functionally, essential for sporulation. Interferes with or is a negative regulator of the pathway leading to asymmetric septation. The polypeptide is Putative septation protein SpoVG (Bacillus velezensis (strain DSM 23117 / BGSC 10A6 / LMG 26770 / FZB42) (Bacillus amyloliquefaciens subsp. plantarum)).